A 291-amino-acid polypeptide reads, in one-letter code: MANNRNELNKNLAQMLKGGVIMDVTTPEQAKIAQDAGACAVMALERIPADIRAAGGVSRMSDPAMIKGIQEAVSIPVMAKVRIGHIAEARILQAIEIDYIDESEVLSPADDVYHIDKNRFDVPFVCGAKNLGEALRRVAEGASMIRTKGEPGTGDVIQAVRHMRTMNKQIRELVSLRDDEVYEAAKQLAVPYDLAKYVHDNGRLPVVNFAAGGVATPADAALMMELGAEGVFVGSGIFKSGDPAKRAAAIVQATANWQDAELLARLSENLGEAMVGINEDEIETIMAARGE.

D23 provides a ligand contact to D-ribose 5-phosphate. The Schiff-base intermediate with D-ribose 5-phosphate role is filled by K80. G152 lines the D-ribose 5-phosphate pocket. A D-glyceraldehyde 3-phosphate-binding site is contributed by R164. Residues G213 and 234 to 235 (GS) each bind D-ribose 5-phosphate.

It belongs to the PdxS/SNZ family. As to quaternary structure, in the presence of PdxT, forms a dodecamer of heterodimers.

It catalyses the reaction aldehydo-D-ribose 5-phosphate + D-glyceraldehyde 3-phosphate + L-glutamine = pyridoxal 5'-phosphate + L-glutamate + phosphate + 3 H2O + H(+). It functions in the pathway cofactor biosynthesis; pyridoxal 5'-phosphate biosynthesis. In terms of biological role, catalyzes the formation of pyridoxal 5'-phosphate from ribose 5-phosphate (RBP), glyceraldehyde 3-phosphate (G3P) and ammonia. The ammonia is provided by the PdxT subunit. Can also use ribulose 5-phosphate and dihydroxyacetone phosphate as substrates, resulting from enzyme-catalyzed isomerization of RBP and G3P, respectively. The sequence is that of Pyridoxal 5'-phosphate synthase subunit PdxS from Bifidobacterium adolescentis (strain ATCC 15703 / DSM 20083 / NCTC 11814 / E194a).